The sequence spans 590 residues: Aspartate--tRNA(Asp/Asn) ligase (590 aa).

Position 169 (Glu-169) interacts with L-aspartate. Positions 193-196 (QLFK) are aspartate. Arg-215 provides a ligand contact to L-aspartate. ATP contacts are provided by residues 215-217 (RDE) and Gln-224. His-447 serves as a coordination point for L-aspartate. Residue Glu-479 participates in ATP binding. Position 486 (Arg-486) interacts with L-aspartate. 531–534 (GWDR) contributes to the ATP binding site. Residues 556–590 (GGFDPLTAAPAPITPEQRKEAGVDARPQQDLPPQS) are disordered.

It belongs to the class-II aminoacyl-tRNA synthetase family. Type 1 subfamily. As to quaternary structure, homodimer.

The protein localises to the cytoplasm. It catalyses the reaction tRNA(Asx) + L-aspartate + ATP = L-aspartyl-tRNA(Asx) + AMP + diphosphate. Functionally, aspartyl-tRNA synthetase with relaxed tRNA specificity since it is able to aspartylate not only its cognate tRNA(Asp) but also tRNA(Asn). Reaction proceeds in two steps: L-aspartate is first activated by ATP to form Asp-AMP and then transferred to the acceptor end of tRNA(Asp/Asn). This Nocardioides sp. (strain ATCC BAA-499 / JS614) protein is Aspartate--tRNA(Asp/Asn) ligase.